The sequence spans 598 residues: (-)-endo-fenchol synthase, chloroplastic (598 aa).

A chloroplast-targeting transit peptide spans 1-34; it reads MWSTISISMNVAILKKPLNFLHNSNNKASNPRCV. Residues Asp-351, Asp-355, Asp-495, Thr-499, and Glu-503 each contribute to the Mg(2+) site. Residues 351 to 355 carry the DDXXD motif motif; it reads DDVYD.

Belongs to the terpene synthase family. Mg(2+) is required as a cofactor. The cofactor is Mn(2+).

It localises to the plastid. The protein resides in the chloroplast. It catalyses the reaction (2E)-geranyl diphosphate + H2O = (1S,2S,4R)-endo-fenchol + diphosphate. It participates in secondary metabolite biosynthesis; terpenoid biosynthesis. Monoterpene synthase that catalyzes the formation of fenchol from geranyl diphosphate. This is (-)-endo-fenchol synthase, chloroplastic (FES) from Ocimum basilicum (Sweet basil).